The following is a 584-amino-acid chain: Cationic amino acid transporter 7, chloroplastic (584 aa).

A chloroplast-targeting transit peptide spans 1-49 (MEAQYRNHDGDTSFSSLRVYLNSLSDTPSRFSRRAVSVSTSYDEMSRVR). The next 14 helical transmembrane spans lie at 62 to 82 (WYDL…FVTT), 90 to 110 (AGPS…LSAF), 131 to 151 (ITFG…DYVL), 185 to 205 (GFNE…FVIC), 214 to 234 (VNMV…VMGF), 254 to 274 (FFPF…LSYI), 293 to 313 (IPMG…LMAI), 346 to 366 (VVGI…MLGQ), 396 to 416 (ASAF…LNVL), 417 to 437 (LNLV…AVIF), 449 to 469 (WPTL…TLVW), 480 to 500 (FILG…HCVV), 508 to 528 (FWGV…NIFL), and 540 to 560 (FGFF…HASY).

This sequence belongs to the amino acid-polyamine-organocation (APC) superfamily. Cationic amino acid transporter (CAT) (TC 2.A.3.3) family.

The protein resides in the plastid. It is found in the chloroplast membrane. Functionally, permease involved in the transport of the cationic amino acids. This Arabidopsis thaliana (Mouse-ear cress) protein is Cationic amino acid transporter 7, chloroplastic (CAT7).